The sequence spans 1479 residues: ABC transporter ecdL (1479 aa).

The next 3 helical transmembrane spans lie at 32–52 (LLFE…SVAL), 82–102 (LSNA…WLSF), and 142–162 (IASI…VEAM). N-linked (GlcNAc...) asparagine glycosylation is found at asparagine 183 and asparagine 234. The next 2 helical transmembrane spans lie at 251–271 (WGGF…PFLV) and 291–311 (SGLI…TAAF). Residues 258–535 (LCLIGVNYAQ…FVESLMGLRQ (278 aa)) enclose the ABC transmembrane type-1 1 domain. A glycan (N-linked (GlcNAc...) asparagine) is linked at asparagine 345. 2 helical membrane passes run 365-382 (LHET…LWLL) and 391-411 (VAAA…SGLL). A glycan (N-linked (GlcNAc...) asparagine) is linked at asparagine 427. 2 helical membrane passes run 469 to 489 (LLVA…TFAF) and 503 to 523 (PLLA…GQAV). In terms of domain architecture, ABC transporter 1 spans 607–835 (IVLQNHTASW…GSSLRLEELV (229 aa)). Asparagine 611 and asparagine 628 each carry an N-linked (GlcNAc...) asparagine glycan. 641 to 648 (GPIGSGKS) contacts ATP. N-linked (GlcNAc...) asparagine glycans are attached at residues asparagine 793 and asparagine 797. 5 helical membrane-spanning segments follow: residues 885–905 (TIGW…VVAL), 955–975 (LFAV…LHLM), 1028–1048 (ALIG…VIVY), 1052–1072 (YLAA…MFYL), and 1135–1155 (IWLT…LVSI). An ABC transmembrane type-1 2 domain is found at 932–1193 (IWLKFWTEAN…LVYNWTALEN (262 aa)). A glycan (N-linked (GlcNAc...) asparagine) is linked at asparagine 1161. The helical transmembrane segment at 1165-1185 (ASIGLALVNLIAFGANMKGLV) threads the bilayer. A glycan (N-linked (GlcNAc...) asparagine) is linked at asparagine 1187. The ABC transporter 2 domain occupies 1230–1461 (IKFKSVTASY…RSIFASLLRS (232 aa)). Position 1264–1271 (1264–1271 (GRTGCGKS)) interacts with ATP. The tract at residues 1460 to 1479 (RSGDEEPGNGHKHESEGEEE) is disordered. Positions 1461–1479 (SGDEEPGNGHKHESEGEEE) are enriched in basic and acidic residues.

It belongs to the ABC transporter superfamily. ABCC family. Conjugate transporter (TC 3.A.1.208) subfamily.

Its subcellular location is the cell membrane. Functionally, ABC transporter; part of the gene cluster that mediates the biosynthesis of echinocandin B, a fungal lipidated cyclic hexapeptide that acts as an antifungal agent. This is ABC transporter ecdL from Aspergillus rugulosus (Emericella rugulosa).